The chain runs to 396 residues: Elongation factor Tu (396 aa).

Positions 10-206 constitute a tr-type G domain; it reads KPHINVGTIG…QMDAYIPEPQ (197 aa). The interval 19–26 is G1; it reads GHVDHGKT. 19–26 provides a ligand contact to GTP; the sequence is GHVDHGKT. Thr26 lines the Mg(2+) pocket. The tract at residues 60-64 is G2; that stretch reads GITIA. The tract at residues 81-84 is G3; sequence DCPG. GTP is bound by residues 81–85 and 136–139; these read DCPGH and NKAD. The tract at residues 136–139 is G4; sequence NKAD. The interval 174–176 is G5; that stretch reads SAL.

Belongs to the TRAFAC class translation factor GTPase superfamily. Classic translation factor GTPase family. EF-Tu/EF-1A subfamily. Monomer.

The protein localises to the cytoplasm. It catalyses the reaction GTP + H2O = GDP + phosphate + H(+). GTP hydrolase that promotes the GTP-dependent binding of aminoacyl-tRNA to the A-site of ribosomes during protein biosynthesis. The chain is Elongation factor Tu from Nitrosococcus oceani (strain ATCC 19707 / BCRC 17464 / JCM 30415 / NCIMB 11848 / C-107).